The sequence spans 190 residues: Elongation factor P (190 aa).

The protein belongs to the elongation factor P family.

The protein localises to the cytoplasm. It participates in protein biosynthesis; polypeptide chain elongation. Involved in peptide bond synthesis. Stimulates efficient translation and peptide-bond synthesis on native or reconstituted 70S ribosomes in vitro. Probably functions indirectly by altering the affinity of the ribosome for aminoacyl-tRNA, thus increasing their reactivity as acceptors for peptidyl transferase. The chain is Elongation factor P from Pseudomonas fluorescens (strain ATCC BAA-477 / NRRL B-23932 / Pf-5).